Reading from the N-terminus, the 516-residue chain is BAR/IMD domain-containing adapter protein 2-like 2 (516 aa).

Residues 1–227 form the IMD domain; it reads MSGVNSDLLH…PTPLDQEAQL (227 aa). Residues 200 to 273 are disordered; that stretch reads ADGWKEKVSE…SSSVGESLGL (74 aa). The span at 201–212 shows a compositional bias: basic and acidic residues; that stretch reads DGWKEKVSESRS. Polar residues predominate over residues 226 to 236; it reads QLKSSVGSLLQ. A compositionally biased stretch (basic and acidic residues) spans 238-247; it reads GDREMDREPL. Over residues 249–270 the composition is skewed to low complexity; sequence RVPSRAPSPLPSRSRSSSVGES. Positions 274–337 constitute an SH3 domain; it reads GGGRSMRAIV…PAAYVASTED (64 aa). Residues 355 to 376 are compositionally biased toward polar residues; it reads LLEPTSQSESDTQTYSEVSSPV. The tract at residues 355–516 is disordered; it reads LLEPTSQSES…TNDRSAPRIQ (162 aa). The segment covering 434 to 450 has biased composition (basic and acidic residues); the sequence is PDRRAESHFESKVELKN. A compositionally biased stretch (pro residues) spans 454–465; it reads LPPPAPPLPNSP.

The protein localises to the cell membrane. Functionally, phosphoinositides-binding protein that induces the formation of planar or gently curved membrane structures. The polypeptide is BAR/IMD domain-containing adapter protein 2-like 2 (baiap2l2) (Danio rerio (Zebrafish)).